Reading from the N-terminus, the 84-residue chain is Large ribosomal subunit protein bL27 (84 aa).

The segment at 1-22 (MAHKKAGGSTRNGRDSESKRLG) is disordered.

It belongs to the bacterial ribosomal protein bL27 family.

In Shewanella frigidimarina (strain NCIMB 400), this protein is Large ribosomal subunit protein bL27.